The chain runs to 140 residues: 3-hydroxyacyl-[acyl-carrier-protein] dehydratase FabZ (140 aa).

Residue histidine 47 is part of the active site.

Belongs to the thioester dehydratase family. FabZ subfamily.

The protein localises to the cytoplasm. The enzyme catalyses a (3R)-hydroxyacyl-[ACP] = a (2E)-enoyl-[ACP] + H2O. Its function is as follows. Involved in unsaturated fatty acids biosynthesis. Catalyzes the dehydration of short chain beta-hydroxyacyl-ACPs and long chain saturated and unsaturated beta-hydroxyacyl-ACPs. The chain is 3-hydroxyacyl-[acyl-carrier-protein] dehydratase FabZ from Streptococcus pneumoniae serotype 4 (strain ATCC BAA-334 / TIGR4).